The following is a 180-amino-acid chain: ATP-dependent protease subunit HslV (180 aa).

Thr-8 is a catalytic residue. The Na(+) site is built by Ser-165, Cys-168, and Thr-171.

Belongs to the peptidase T1B family. HslV subfamily. In terms of assembly, a double ring-shaped homohexamer of HslV is capped on each side by a ring-shaped HslU homohexamer. The assembly of the HslU/HslV complex is dependent on binding of ATP.

It localises to the cytoplasm. The catalysed reaction is ATP-dependent cleavage of peptide bonds with broad specificity.. Allosterically activated by HslU binding. In terms of biological role, protease subunit of a proteasome-like degradation complex believed to be a general protein degrading machinery. The chain is ATP-dependent protease subunit HslV from Staphylococcus saprophyticus subsp. saprophyticus (strain ATCC 15305 / DSM 20229 / NCIMB 8711 / NCTC 7292 / S-41).